The chain runs to 192 residues: NF-kappa-B inhibitor-interacting Ras-like protein 1 (192 aa).

11–18 serves as a coordination point for GTP; that stretch reads GLLSVGKT. An Effector region motif is present at residues 35–43; that stretch reads DCETMEDVY. The tract at residues 58–93 is interactions with NFKBIA and NFKBIB; sequence HLYDTRGLQEGVELPKHYFSFADGFVLVYSVNNLES. Residues 61 to 65 and 120 to 123 each bind GTP; these read DTRGL and NKID. Residues 168-192 form a disordered region; the sequence is LSQPQSKSSFPLPGRKNKGNSNSEN.

This sequence belongs to the small GTPase superfamily. Ras family. KappaB-Ras subfamily. In terms of assembly, interacts with both NF-kappa-B inhibitor alpha (NFKBIA) and beta (NFKBIB) in vitro. However, it probably only interacts with NFKBIB in vivo. Forms a complex with NFKBIB and NF-kappa-B heterodimer (p50/NFKB1 and p65/RELA). Also interacts with c-Rel (REL). Widely expressed.

Its subcellular location is the cytoplasm. Atypical Ras-like protein that acts as a potent regulator of NF-kappa-B activity by preventing the degradation of NF-kappa-B inhibitor beta (NFKBIB) by most signals, explaining why NFKBIB is more resistant to degradation. May act by blocking phosphorylation of NFKBIB and mediating cytoplasmic retention of p65/RELA NF-kappa-B subunit. It is unclear whether it acts as a GTPase. Both GTP- and GDP-bound forms block phosphorylation of NFKBIB. In Homo sapiens (Human), this protein is NF-kappa-B inhibitor-interacting Ras-like protein 1 (NKIRAS1).